We begin with the raw amino-acid sequence, 127 residues long: Holo-[acyl-carrier-protein] synthase (127 aa).

Residues Asp8 and Glu56 each contribute to the Mg(2+) site.

This sequence belongs to the P-Pant transferase superfamily. AcpS family. It depends on Mg(2+) as a cofactor.

Its subcellular location is the cytoplasm. The enzyme catalyses apo-[ACP] + CoA = holo-[ACP] + adenosine 3',5'-bisphosphate + H(+). In terms of biological role, transfers the 4'-phosphopantetheine moiety from coenzyme A to a Ser of acyl-carrier-protein. This Cytophaga hutchinsonii (strain ATCC 33406 / DSM 1761 / CIP 103989 / NBRC 15051 / NCIMB 9469 / D465) protein is Holo-[acyl-carrier-protein] synthase.